The primary structure comprises 633 residues: MDDPECDSTWEDESEEDGEDGQADDTTDEDTGDDDGDAEEARPSLFQSRMTRYRNWRAMQDMQRYRHNYPDLTDQDCNGDMCNLSFYKNEICFQPNGFLIEDILQNWKDNYDLLEENHSYIQWLFPLREPGVNWHAKPLTLKEVEAFKSSKEVRERLVRAYELMLGFYGIQLEDRNTGAVCRAQNFQPRFHNLNSHSHNNLRITRILKSLGELGLEHYQAPLVRFFLEETLVQHKLPSVRQSALDYFLFAVRCRHQRRELVHFAWEHFKPRREFVWGPRDKLRRFRPQTISRPLMGLGQADKDEGPGDPSQEAGTQGRTCGSGRDLSGDSGTAEDLSLLSAKPQDVGTLDGDQRHEAKSPSPKESKKRKLEGNRQEQVPGEPDPQGVSEVEKIALNLEGCALSPTSQEPREAEQPCLVARVANEVRKRRKVEEGAEGDGVASNTQVQASALSPTPSECPESQKDGNGPEDPKSQVGPEDPKSQVGPEDPKSQVGPEDPKSQVGPEDPKGQVEPEDPKGQVGPEDPKGQVGPEDPKGQVGPEDPKSQVGPEDPKSQVEPEDPKSQVEPEDPKSQVEPEDPKSQVGPEDPQSQVGPEQAASKSLGEDPDSDTTGTSMSESEELARIEASVEPPKP.

Met1 bears the N-acetylmethionine mark. Residues Met1 to Ala38 are compositionally biased toward acidic residues. The segment at Met1–Ser44 is disordered. The short motif at Arg257–Arg286 is the Bipartite nuclear localization signal element. Residues Pro287–Val390 are disordered. Residues Ser327, Ser340, Ser361, Ser365, Ser403, and Ser452 each carry the phosphoserine modification. The span at Gly351–Arg374 shows a compositional bias: basic and acidic residues. Residues Pro404–Pro633 form a disordered region. Positions Ala441 to Pro455 are enriched in polar residues. Tandem repeats lie at residues Gly467–Val475, Gly476–Val484, Gly485–Val493, Gly494–Val502, Gly503–Val511, Glu512–Val520, Gly521–Val529, Gly530–Val538, Gly539–Val547, Gly548–Val556, Glu557–Val565, Glu566–Val574, Glu575–Val583, and Gly584–Val592. A 14 X approximate tandem repeats region spans residues Gly467–Val592. Residues Glu505 to Lys517 show a composition bias toward basic and acidic residues. Basic and acidic residues predominate over residues Glu550 to Lys580. Phosphoserine is present on residues Ser601 and Ser608.

The protein belongs to the opioid growth factor receptor family. In terms of tissue distribution, expressed in all tissues examined, including brain, heart, lung, liver, kidney and skeletal muscle.

It is found in the cytoplasm. The protein resides in the nucleus. In terms of biological role, receptor for opioid growth factor (OGF), also known as Met-enkephalin. Seems to be involved in growth regulation. This chain is Opioid growth factor receptor (Ogfr), found in Mus musculus (Mouse).